Here is a 243-residue protein sequence, read N- to C-terminus: Terpene cyclase atmB (243 aa).

Helical transmembrane passes span 19 to 39 (IADV…VGMV), 48 to 68 (YGMA…YGLI), 78 to 98 (GVFL…IKFG), 112 to 132 (LPLI…ALAA), 134 to 154 (IGPA…LSVG), 169 to 189 (SYTL…SAWL), and 205 to 225 (LILW…VCFY).

This sequence belongs to the paxB family.

It is found in the membrane. In terms of biological role, terpene cyclase; part of the ATM2 gene cluster that mediates the biosynthesis of aflatrem, a tremorgenic mycotoxin with acute neurotoxic effects. Synthesis of geranylgeranyl diphosphate (GGPP) by AtmG (a GGPP synthase) precedes condensation of GGPP with indole 3-glycerol phosphate, followed by epoxidation and cyclization by AtmM (a FAD-dependent monooxygenase) and AtmC (a prenyltransferase) to produce paspaline. AtmB is also essential for paspaline production, but its exact role has not been identified yet. AtmP, a cytochrome P450 monooxygenase, subsequently converts paspaline to 13-desoxypaxilline via PC-M6 by removal of the C-30 methyl group and oxidation at C-10. AtmQ, a cytochrome P450 monooxygenase, then catalyzes the oxidation of 13-desoxypaxilline, first at C-7 to produce paspalicine and then at C-13 to form paspalinine. Finally, AtmD prenylates paspalinine to form aflatrem. In Aspergillus flavus, this protein is Terpene cyclase atmB.